A 372-amino-acid chain; its full sequence is Glutamate 5-kinase (372 aa).

Lys14 is a binding site for ATP. Positions 54, 141, and 153 each coordinate substrate. ATP-binding positions include 173-174 (TD) and 215-221 (TGGMATK). One can recognise a PUA domain in the interval 280–358 (KGKLVLDVGA…DEIESLLGYD (79 aa)).

Belongs to the glutamate 5-kinase family.

It localises to the cytoplasm. It catalyses the reaction L-glutamate + ATP = L-glutamyl 5-phosphate + ADP. It functions in the pathway amino-acid biosynthesis; L-proline biosynthesis; L-glutamate 5-semialdehyde from L-glutamate: step 1/2. Functionally, catalyzes the transfer of a phosphate group to glutamate to form L-glutamate 5-phosphate. This Shewanella woodyi (strain ATCC 51908 / MS32) protein is Glutamate 5-kinase.